A 309-amino-acid chain; its full sequence is uncharacterized protein (309 aa).

The segment at residues 1–32 (MTGTAPVSRRQYLGTAGAIIGTTAGCLTGADA) is a signal peptide (tat-type signal).

It belongs to the bacterial solute-binding protein 1 family. WtpA subfamily. Predicted to be exported by the Tat system. The position of the signal peptide cleavage has not been experimentally proven.

This is an uncharacterized protein from Halobacterium salinarum (strain ATCC 700922 / JCM 11081 / NRC-1) (Halobacterium halobium).